Reading from the N-terminus, the 79-residue chain is Mycoredoxin 1 (79 aa).

The Glutaredoxin domain occupies Met-1 to Ala-79.

The protein belongs to the glutaredoxin family.

It localises to the cytoplasm. It carries out the reaction [mycoredoxin]-L-cysteine + arseno-mycothiol + H(+) = [mycoredoxin]-S-mycothiol-L-cysteine + arsenite. Its function is as follows. Involved in defense against toxic arsenate. Involved in the mycothiol/myoredoxin redox pathway which uses a mycothioltransferase mechanism; functions as a monothiol mixed disulfide reductase and is recycled by a second mycothiol forming mycothione which in turn is reduced in a NADPH-dependent manner. The chain is Mycoredoxin 1 (mrx1) from Corynebacterium glutamicum (strain ATCC 13032 / K051).